The chain runs to 420 residues: Polyketide biosynthesis 3-hydroxy-3-methylglutaryl-ACP synthase PksG (420 aa).

Catalysis depends on E82, which acts as the Proton donor/acceptor. The Acyl-thioester intermediate role is filled by C114. The Proton donor/acceptor role is filled by H250.

Belongs to the thiolase-like superfamily. HMG-CoA synthase family.

It is found in the cytoplasm. The enzyme catalyses 3-oxobutanoyl-[ACP] + acetyl-[ACP] + H2O = (3S)-hydroxy-3-methylglutaryl-[ACP] + holo-[ACP] + H(+). The protein operates within antibiotic biosynthesis; bacillaene biosynthesis. Functionally, involved in some intermediate steps for the synthesis of the antibiotic polyketide bacillaene which is involved in secondary metabolism. It catalyzes the aldol condensation between the acetyl group attached to the acyl-carrier-protein AcpK (Ac-AcpK) and a beta-ketothioester polyketide intermediate linked to one of the consecutive thiolation domains of PksL. The protein is Polyketide biosynthesis 3-hydroxy-3-methylglutaryl-ACP synthase PksG (pksG) of Bacillus subtilis (strain 168).